The chain runs to 206 residues: Large ribosomal subunit protein eL13 (206 aa).

The span at 184-193 shows a compositional bias: basic and acidic residues; it reads EKTNQKWDGK. The segment at 184–206 is disordered; the sequence is EKTNQKWDGKRKAKAQAAAEPKA.

This sequence belongs to the eukaryotic ribosomal protein eL13 family.

In Tetrahymena thermophila (strain SB210), this protein is Large ribosomal subunit protein eL13 (RPL13).